Here is a 250-residue protein sequence, read N- to C-terminus: Carboxy-S-adenosyl-L-methionine synthase (250 aa).

Residues Y45, 70–72 (GCS), 95–96 (DN), 123–124 (DI), N138, and R205 contribute to the S-adenosyl-L-methionine site.

The protein belongs to the class I-like SAM-binding methyltransferase superfamily. Cx-SAM synthase family. Homodimer.

It catalyses the reaction prephenate + S-adenosyl-L-methionine = carboxy-S-adenosyl-L-methionine + 3-phenylpyruvate + H2O. Its function is as follows. Catalyzes the conversion of S-adenosyl-L-methionine (SAM) to carboxy-S-adenosyl-L-methionine (Cx-SAM). The sequence is that of Carboxy-S-adenosyl-L-methionine synthase from Marinobacter nauticus (strain ATCC 700491 / DSM 11845 / VT8) (Marinobacter aquaeolei).